The following is a 1225-amino-acid chain: DNA-directed RNA polymerase subunit beta' (1225 aa).

The Zn(2+) site is built by cysteine 60, cysteine 62, cysteine 75, and cysteine 78. Mg(2+) contacts are provided by aspartate 450, aspartate 452, and aspartate 454. Cysteine 818, cysteine 892, cysteine 899, and cysteine 902 together coordinate Zn(2+).

Belongs to the RNA polymerase beta' chain family. The RNAP catalytic core consists of 2 alpha, 1 beta, 1 beta' and 1 omega subunit. When a sigma factor is associated with the core the holoenzyme is formed, which can initiate transcription. Requires Mg(2+) as cofactor. The cofactor is Zn(2+).

It catalyses the reaction RNA(n) + a ribonucleoside 5'-triphosphate = RNA(n+1) + diphosphate. DNA-dependent RNA polymerase catalyzes the transcription of DNA into RNA using the four ribonucleoside triphosphates as substrates. The chain is DNA-directed RNA polymerase subunit beta' from Streptococcus pneumoniae (strain Hungary19A-6).